Consider the following 538-residue polypeptide: Chaperonin GroEL 2 (538 aa).

ATP is bound by residues 29-32, 86-90, G412, 479-481, and D495; these read TLGP, DGTTT, and NAA.

This sequence belongs to the chaperonin (HSP60) family. Forms a cylinder of 14 subunits composed of two heptameric rings stacked back-to-back. Interacts with the co-chaperonin GroES.

The protein localises to the cytoplasm. It carries out the reaction ATP + H2O + a folded polypeptide = ADP + phosphate + an unfolded polypeptide.. Its function is as follows. Together with its co-chaperonin GroES, plays an essential role in assisting protein folding. The GroEL-GroES system forms a nano-cage that allows encapsulation of the non-native substrate proteins and provides a physical environment optimized to promote and accelerate protein folding. The sequence is that of Chaperonin GroEL 2 from Renibacterium salmoninarum (strain ATCC 33209 / DSM 20767 / JCM 11484 / NBRC 15589 / NCIMB 2235).